The chain runs to 507 residues: Pre-glycoprotein polyprotein GP complex (507 aa).

Residue G2 is the site of N-myristoyl glycine; by host attachment. The Extracellular portion of the chain corresponds to 2–17 (GQVVTFLQSLPEVINE). The chain crosses the membrane as a helical span at residues 18-33 (AINIALIAISIICILK). The Cytoplasmic portion of the chain corresponds to 34–58 (GLVNFWKCGVVQLAIFLCLAGRKCD). Position 57 (C57) interacts with Zn(2+). Topologically, residues 59-445 (GLMIDRRHEL…QGKTPIALTD (387 aa)) are extracellular. 4 disulfide bridges follow: C86–C247, C292–C305, C314–C323, and C377–C398. 4 N-linked (GlcNAc...) asparagine; by host glycosylation sites follow: N89, N111, N179, and N240. 4 N-linked (GlcNAc...) asparagine; by host glycosylation sites follow: N378, N386, N403, and N408. The chain crosses the membrane as a helical span at residues 446–466 (ICFWSLVFFTSTVFLQLVGIP). The Cytoplasmic segment spans residues 467–507 (THRHLVGEGCPKPHRITSNSLCACGYYKIPKRPTRWVRKGK). 6 residues coordinate Zn(2+): H468, H470, C476, H480, C488, and C490.

It belongs to the arenaviridae GPC protein family. As to quaternary structure, interacts with glycoprotein G2. Part of the GP complex (GP-C) together with glycoprotein G1 and glycoprotein G2. The GP-complex interacts with protein Z, which interacts with ribonucleocapsid; these interactions may induce virion budding. Homotrimer; disulfide-linked. In pre-fusion state, G1 homotrimers bind G2 homotrimers via ionic interactions. Part of the GP complex (GP-C) together with glycoprotein G2 and the stable signal peptide. The GP-complex interacts with protein Z, which interacts with ribonucleocapsid; these interactions may induce virion budding. In terms of assembly, homotrimer. Interacts with the stable signal peptide. In pre-fusion state, G2 homotrimers bind G1 homotrimers via ionic interactions. Part of the GP complex (GP-C) together with glycoprotein G1 and the stable signal peptide. Acidification in the endosome triggers rearrangements, which ultimately leads to a 6 helix bundle formed by the two heptad repeat domains (HR1 and HR2) in post-fusion state. The GP-complex interacts with protein Z, which interacts with ribonucleocapsid; these interactions may induce virion budding. In terms of processing, specific enzymatic cleavages in vivo yield mature proteins. GP-C polyprotein is cleaved in the endoplasmic reticulum by the host protease MBTPS1. Only cleaved glycoprotein is incorporated into virions. Post-translationally, the SSP remains stably associated with the GP complex following cleavage by signal peptidase and plays crucial roles in the trafficking of GP through the secretory pathway. Myristoylation is necessary for GP2-mediated fusion activity.

The protein localises to the virion membrane. The protein resides in the host endoplasmic reticulum membrane. It is found in the host Golgi apparatus membrane. It localises to the host cell membrane. Functionally, functions as a cleaved signal peptide that is retained as the third component of the GP complex (GP-C). Helps to stabilize the spike complex in its native conformation. The SSP is required for efficient glycoprotein expression, post-translational maturation cleavage of G1 and G2, glycoprotein transport to the cell surface plasma membrane, formation of infectious virus particles, and acid pH-dependent glycoprotein-mediated cell fusion. In terms of biological role, forms the virion spikes together with glycoprotein G2. The glycoprotein spike trimers are connected to the underlying matrix. Interacts with the host receptor leading to virus endocytosis. Forms the virion spikes together with glycoprotein G1. The glycoprotein spike trimers are connected to the underlying matrix. Class I viral fusion protein that directs fusion of viral and host endosomal membranes, leading to delivery of the nucleocapsid into the cytoplasm. Membrane fusion is mediated by irreversible conformational changes induced by acidification. The protein is Pre-glycoprotein polyprotein GP complex of Allpahuayo mammarenavirus (isolate Rat/Peru/CLHP-2472/1997) (ALLV).